Here is a 209-residue protein sequence, read N- to C-terminus: Small ribosomal subunit protein uS5 (209 aa).

The segment covering 1–11 has biased composition (polar residues); sequence MTQPNTQTTPN. The tract at residues 1–55 is disordered; that stretch reads MTQPNTQTTPNDVPAAAEGQQEQQQQQRRGGGRERRGGGRRGDRRGQERDSEWQE. Positions 18–28 are enriched in low complexity; that stretch reads EGQQEQQQQQR. Positions 31 to 55 are enriched in basic and acidic residues; the sequence is GGRERRGGGRRGDRRGQERDSEWQE. The S5 DRBM domain maps to 53 to 116; the sequence is WQERVVQIRR…ADGKKHLVKV (64 aa).

Belongs to the universal ribosomal protein uS5 family. As to quaternary structure, part of the 30S ribosomal subunit. Contacts proteins S4 and S8.

In terms of biological role, with S4 and S12 plays an important role in translational accuracy. Its function is as follows. Located at the back of the 30S subunit body where it stabilizes the conformation of the head with respect to the body. This is Small ribosomal subunit protein uS5 from Prochlorococcus marinus (strain MIT 9313).